The primary structure comprises 625 residues: Zinc finger protein 652-A (625 aa).

A disordered region spans residues 80 to 255; that stretch reads FFRDSKPINE…PSDKAKSEEK (176 aa). Basic and acidic residues predominate over residues 82–100; it reads RDSKPINEVHSVKGERENS. Positions 101 to 127 are enriched in acidic residues; the sequence is GESEEEEDDDDDDDDEDDEEGEEDEDE. The span at 150 to 166 shows a compositional bias: basic and acidic residues; sequence KGDKGVAQDSSHIKTSS. Positions 167-186 are enriched in acidic residues; the sequence is DDEEGDSGEDDQDSHEDEEN. Basic and acidic residues predominate over residues 240–255; sequence PKEPKSPSDKAKSEEK. Residues 258-281 form a C2H2-type 1 zinc finger; that stretch reads LTCDKCPRVFNTRWYLEKHMNVTH. A C2H2-type 2; degenerate zinc finger spans residues 285–307; sequence QICDKCGKKFVLESELSLHLQTD. 6 C2H2-type zinc fingers span residues 312–335, 342–364, 370–392, 398–420, 426–448, and 454–476; these read IQCITCNKTFKKLWSLHEHIKIVH, FSCEICEKKFYTMAHVRKHLVAH, FTCETCGKSFKRSMSLKVHSLQH, FRCENCDERFQYKYQLRSHMSIH, FMCQWCGKDFNMKQYFDEHMKTH, and FICEICGKSFTSRPNMKRHRRTH. The segment at 482–505 adopts a C2H2-type 9; degenerate zinc-finger fold; it reads YPCDVCGMRFRFSNMLKAHKEKCF.

This sequence belongs to the krueppel C2H2-type zinc-finger protein family.

The protein resides in the nucleus. May be involved in transcriptional regulation. This chain is Zinc finger protein 652-A (znf652-a), found in Xenopus laevis (African clawed frog).